A 138-amino-acid polypeptide reads, in one-letter code: Holo-[acyl-carrier-protein] synthase (138 aa).

Residues aspartate 11 and glutamate 65 each contribute to the Mg(2+) site.

It belongs to the P-Pant transferase superfamily. AcpS family. It depends on Mg(2+) as a cofactor.

Its subcellular location is the cytoplasm. The catalysed reaction is apo-[ACP] + CoA = holo-[ACP] + adenosine 3',5'-bisphosphate + H(+). Transfers the 4'-phosphopantetheine moiety from coenzyme A to a Ser of acyl-carrier-protein. This is Holo-[acyl-carrier-protein] synthase from Ralstonia nicotianae (strain ATCC BAA-1114 / GMI1000) (Ralstonia solanacearum).